A 75-amino-acid polypeptide reads, in one-letter code: Small ribosomal subunit protein bS18 (75 aa).

Belongs to the bacterial ribosomal protein bS18 family. As to quaternary structure, part of the 30S ribosomal subunit. Forms a tight heterodimer with protein bS6.

Its function is as follows. Binds as a heterodimer with protein bS6 to the central domain of the 16S rRNA, where it helps stabilize the platform of the 30S subunit. This is Small ribosomal subunit protein bS18 from Glaesserella parasuis serovar 5 (strain SH0165) (Haemophilus parasuis).